A 159-amino-acid chain; its full sequence is Large ribosomal subunit protein uL22 (159 aa).

The tract at residues Val129–Lys159 is disordered.

Belongs to the universal ribosomal protein uL22 family. Part of the 50S ribosomal subunit.

In terms of biological role, this protein binds specifically to 23S rRNA; its binding is stimulated by other ribosomal proteins, e.g. L4, L17, and L20. It is important during the early stages of 50S assembly. It makes multiple contacts with different domains of the 23S rRNA in the assembled 50S subunit and ribosome. Its function is as follows. The globular domain of the protein is located near the polypeptide exit tunnel on the outside of the subunit, while an extended beta-hairpin is found that lines the wall of the exit tunnel in the center of the 70S ribosome. This chain is Large ribosomal subunit protein uL22 (rplV), found in Mycoplasma pneumoniae (strain ATCC 29342 / M129 / Subtype 1) (Mycoplasmoides pneumoniae).